Consider the following 179-residue polypeptide: Large ribosomal subunit protein uL6 (179 aa).

Belongs to the universal ribosomal protein uL6 family. As to quaternary structure, part of the 50S ribosomal subunit.

Its function is as follows. This protein binds to the 23S rRNA, and is important in its secondary structure. It is located near the subunit interface in the base of the L7/L12 stalk, and near the tRNA binding site of the peptidyltransferase center. In Chlorobium phaeobacteroides (strain DSM 266 / SMG 266 / 2430), this protein is Large ribosomal subunit protein uL6.